Reading from the N-terminus, the 425-residue chain is MHKILIRNNYKPLVGKIKINGSKNAVLPIMAASLLSSSSVILHNVPDLIDVHLMSKLLESLGAEVNFMHNKNYKANHTLKIDCSNINNHVMPYKTASKLRTSFLILGPMLSRFGKARTAFPGGCNIGKRPVDMHIKALEEMGAKIEIDGYNIIATVKGKLQGKEITFEKISVGATENVIMAATFAEGVTTINNAATEPEVLDLIDFLKKMGADIEIDNTKVIITGVEALNGCVHKIIPDRIEAGTYALAAIITGGKLELEGINLSDIRCITNELETIGAMVELYDGGIVISRKNGSIKSANVATDPYPNFPSDMQPQLMSAMCIADGISVIEENIFENRFTHADELRKLGANISIEKSKATISGIKSLSGANLYATDLRSTAALVLASLVAGGETIINNSHHLWRGYEAMHEKLNSCGADISISS.

Phosphoenolpyruvate is bound at residue 23–24 (KN). UDP-N-acetyl-alpha-D-glucosamine is bound at residue Arg100. Catalysis depends on Cys124, which acts as the Proton donor. Cys124 is modified (2-(S-cysteinyl)pyruvic acid O-phosphothioketal). UDP-N-acetyl-alpha-D-glucosamine-binding residues include Asp313 and Ile335.

It belongs to the EPSP synthase family. MurA subfamily.

The protein resides in the cytoplasm. It catalyses the reaction phosphoenolpyruvate + UDP-N-acetyl-alpha-D-glucosamine = UDP-N-acetyl-3-O-(1-carboxyvinyl)-alpha-D-glucosamine + phosphate. The protein operates within cell wall biogenesis; peptidoglycan biosynthesis. Its function is as follows. Cell wall formation. Adds enolpyruvyl to UDP-N-acetylglucosamine. In Wolbachia pipientis wMel, this protein is UDP-N-acetylglucosamine 1-carboxyvinyltransferase.